We begin with the raw amino-acid sequence, 343 residues long: Probable 3',5'-cyclic-nucleotide phosphodiesterase (343 aa).

The signal sequence occupies residues M1–A36.

Belongs to the cyclic nucleotide phosphodiesterase class-II family.

It localises to the periplasm. The enzyme catalyses a nucleoside 3',5'-cyclic phosphate + H2O = a nucleoside 5'-phosphate + H(+). This is Probable 3',5'-cyclic-nucleotide phosphodiesterase (cpdP) from Yersinia pestis.